Here is a 199-residue protein sequence, read N- to C-terminus: RNA-binding protein, mRNA-processing factor 2a (199 aa).

An RRM domain is found at 20 to 97 (RTLFVSGLPV…QTLRLEFAKA (78 aa)).

As to quaternary structure, interacts with Bucky ball (BUC); to mediate Balbiani body formation and oocyte polarity during early oogenesis.

The protein localises to the cytoplasm. Its subcellular location is the nucleus. It is found in the stress granule. RNA-binding protein involved in the regulation of smooth muscle cell differentiation and proliferation in the gastrointestinal system. RNA-binding protein localized in Balbiani body (electron-dense aggregates in the oocyte) and germ plasm during oogenesis, and may be required to maintain germ plasm mRNA translational repression. Translational regulator during topographic map formation in the visual system. Establishes oocyte polarity through interaction with Bucky ball (BUC). Acts as a pre-mRNA alternative splicing regulator. Mediates ACTN1 and FLNB alternative splicing. Likely binds to mRNA tandem CAC trinucleotide or CA dinucleotide motifs. This chain is RNA-binding protein, mRNA-processing factor 2a, found in Danio rerio (Zebrafish).